The primary structure comprises 384 residues: Organic solute transporter alpha-like protein 1 (384 aa).

Residues 1–38 (MEIVKTIIPHNRSYIEPPIPSATEWLANMSVMHVSCLT) lie on the Extracellular side of the membrane. N-linked (GlcNAc...) asparagine glycosylation is found at Asn11 and Asn28. A helical transmembrane segment spans residues 39–59 (IACVFVAITFLSSFFHLFFVL). The Cytoplasmic portion of the chain corresponds to 60–70 (KYVSNERIRND). A helical membrane pass occupies residues 71-91 (MYALIFMFPITTFASLVGMFI). Residues 92-93 (PR) lie on the Extracellular side of the membrane. The helical transmembrane segment at 94-114 (AAIFLYAVSLVYFMFTLFIMV) threads the bilayer. Over 115–165 (TLLFNIFGGRQEMSAYLLQRNIRVNFTVPPLCFFKFLPTVESTDQNLRRIE) the chain is Cytoplasmic. A helical transmembrane segment spans residues 166 to 186 (WLVFQTPIIRTLLELVSVVVS). Over 187 to 202 (MEQEGRRESVWFVFSQ) the chain is Extracellular. Residues 203–223 (LMALLSMCIAFYGCYVMVPLG) traverse the membrane as a helical segment. The Cytoplasmic segment spans residues 224-240 (REKHAPYRFDFLFRTCD). A helical transmembrane segment spans residues 241–261 (IAQCIYTIQKFVFEFAAAVGL). Over 262 to 273 (ITSDRYLPAAAK) the chain is Extracellular. Residues 274 to 294 (ALWWASFMCTWEMMLLSALCS) form a helical membrane-spanning segment. Over 295–384 (YCLRPAKCKF…FDSLSQIQGQ (90 aa)) the chain is Cytoplasmic.

The protein belongs to the OST-alpha family.

It localises to the cell membrane. Its function is as follows. Probable transporter. The polypeptide is Organic solute transporter alpha-like protein 1 (osta-1) (Caenorhabditis elegans).